A 598-amino-acid chain; its full sequence is MLKRCLSPLTLVNQVALIVLLSTAIGLAGMAVSGWLVQGVQGSAHAINKAGSLRMQSYRLLAAVPLSEKDKPLIKEMEQTAFSAELTRAAERDGQLAQLQGLQDYWRNELIPALMRAQNRETVSADVSQFVAGLDQLVSGFDRTTEMRIETVVLVHRVMAVFMALLLVFTIIWLRARLLQPWRQLLAMASAVSHRDFTQRANISGRNEMAMLGTALNNMSAELAESYAVLEQRVQEKTAGLEHKNQILSFLWQANRRLHSRAPLCERLSPVLNGLQNLTLLRDIELRVYDTDDEENHQEFTCQPDMTCDDKGCQLCPRGVLPVGDRGTTLKWRLADSHTQYGILLATLPQGRHLSHDQQQLVDTLVEQLTATLALDRHQERQQQLIVMEERATIARELHDSIAQSLSCMKMQVSCLQMQGDALPESSRELLSQIRNELNASWAQLRELLTTFRLQLTEPGLRPALEASCEEYSAKFGFPVKLDYQLPPRLVPSHQAIHLLQIAREALSNALKHSQASEVVVTVAQNDNQVKLTVQDNGCGVPENAIRSNHYGMIIMRDRAQSLRGDCRVRRRESGGTEVVVTFIPEKTFTDVQGDTHE.

At 1-14 the chain is on the cytoplasmic side; sequence MLKRCLSPLTLVNQ. Residues 15–37 form a helical membrane-spanning segment; that stretch reads VALIVLLSTAIGLAGMAVSGWLV. The Periplasmic portion of the chain corresponds to 38–151; the sequence is QGVQGSAHAI…DRTTEMRIET (114 aa). A helical transmembrane segment spans residues 152-174; sequence VVLVHRVMAVFMALLLVFTIIWL. Over 175–598 the chain is Cytoplasmic; sequence RARLLQPWRQ…FTDVQGDTHE (424 aa). In terms of domain architecture, HAMP spans 176-228; it reads ARLLQPWRQLLAMASAVSHRDFTQRANISGRNEMAMLGTALNNMSAELAESYA. The region spanning 393–587 is the Histidine kinase domain; the sequence is TIARELHDSI…EVVVTFIPEK (195 aa). Residue His399 is modified to Phosphohistidine; by autocatalysis.

The protein localises to the cell inner membrane. It carries out the reaction ATP + protein L-histidine = ADP + protein N-phospho-L-histidine.. Its function is as follows. Acts as a sensor for nitrate/nitrite and transduces signal of nitrate availability to the NarL protein and of both nitrate/nitrite to the NarP protein. NarX probably activates NarL and NarP by phosphorylation in the presence of nitrate. NarX also plays a negative role in controlling NarL activity, probably through dephosphorylation in the absence of nitrate. The polypeptide is Nitrate/nitrite sensor protein NarX (narX) (Escherichia coli O157:H7).